A 237-amino-acid chain; its full sequence is UPF0502 protein HEAR1280 (237 aa).

The span at 1–13 (MNTEVMHSTSTES) shows a compositional bias: polar residues. A disordered region spans residues 1 to 21 (MNTEVMHSTSTESDAQEKPQA).

Belongs to the UPF0502 family.

This is UPF0502 protein HEAR1280 from Herminiimonas arsenicoxydans.